We begin with the raw amino-acid sequence, 109 residues long: Cell division protein ZapA (109 aa).

Positions 21 to 99 (PDQRDALNQA…IEQALLEQGR (79 aa)) form a coiled coil.

It belongs to the ZapA family. Type 1 subfamily. In terms of assembly, homodimer. Interacts with FtsZ.

It localises to the cytoplasm. In terms of biological role, activator of cell division through the inhibition of FtsZ GTPase activity, therefore promoting FtsZ assembly into bundles of protofilaments necessary for the formation of the division Z ring. It is recruited early at mid-cell but it is not essential for cell division. The protein is Cell division protein ZapA of Shigella boydii serotype 18 (strain CDC 3083-94 / BS512).